The sequence spans 380 residues: Alcohol dehydrogenase 1 (380 aa).

Zn(2+)-binding residues include cysteine 48, threonine 50, histidine 70, cysteine 100, cysteine 103, cysteine 106, cysteine 114, and cysteine 178. An alcohol is bound by residues threonine 50 and histidine 70. Threonine 50 contributes to the NAD(+) binding site. Residues 203–208, aspartate 227, arginine 232, threonine 273, valine 296, 296–298, and arginine 373 each bind NAD(+); these read GLGAVG and VGV.

It belongs to the zinc-containing alcohol dehydrogenase family. Homodimer. Zn(2+) serves as cofactor.

It localises to the cytoplasm. The enzyme catalyses a primary alcohol + NAD(+) = an aldehyde + NADH + H(+). It carries out the reaction a secondary alcohol + NAD(+) = a ketone + NADH + H(+). This Trifolium repens (Creeping white clover) protein is Alcohol dehydrogenase 1 (ADH1).